The primary structure comprises 150 residues: Deoxyuridine 5'-triphosphate nucleotidohydrolase (150 aa).

Substrate is bound by residues 69–71 (RSG), asparagine 82, and 86–88 (LID).

This sequence belongs to the dUTPase family. Requires Mg(2+) as cofactor.

It catalyses the reaction dUTP + H2O = dUMP + diphosphate + H(+). It participates in pyrimidine metabolism; dUMP biosynthesis; dUMP from dCTP (dUTP route): step 2/2. Its function is as follows. This enzyme is involved in nucleotide metabolism: it produces dUMP, the immediate precursor of thymidine nucleotides and it decreases the intracellular concentration of dUTP so that uracil cannot be incorporated into DNA. The polypeptide is Deoxyuridine 5'-triphosphate nucleotidohydrolase (Methylobacillus flagellatus (strain ATCC 51484 / DSM 6875 / VKM B-1610 / KT)).